A 180-amino-acid chain; its full sequence is Acireductone dioxygenase (180 aa).

H97, H99, E103, and H141 together coordinate Fe(2+). The Ni(2+) site is built by H97, H99, E103, and H141.

Belongs to the acireductone dioxygenase (ARD) family. As to quaternary structure, monomer. The cofactor is Fe(2+). Ni(2+) serves as cofactor.

It carries out the reaction 1,2-dihydroxy-5-(methylsulfanyl)pent-1-en-3-one + O2 = 3-(methylsulfanyl)propanoate + CO + formate + 2 H(+). It catalyses the reaction 1,2-dihydroxy-5-(methylsulfanyl)pent-1-en-3-one + O2 = 4-methylsulfanyl-2-oxobutanoate + formate + 2 H(+). The protein operates within amino-acid biosynthesis; L-methionine biosynthesis via salvage pathway; L-methionine from S-methyl-5-thio-alpha-D-ribose 1-phosphate: step 5/6. Its function is as follows. Catalyzes 2 different reactions between oxygen and the acireductone 1,2-dihydroxy-3-keto-5-methylthiopentene (DHK-MTPene) depending upon the metal bound in the active site. Fe-containing acireductone dioxygenase (Fe-ARD) produces formate and 2-keto-4-methylthiobutyrate (KMTB), the alpha-ketoacid precursor of methionine in the methionine recycle pathway. Ni-containing acireductone dioxygenase (Ni-ARD) produces methylthiopropionate, carbon monoxide and formate, and does not lie on the methionine recycle pathway. This Cronobacter sakazakii (strain ATCC BAA-894) (Enterobacter sakazakii) protein is Acireductone dioxygenase.